Reading from the N-terminus, the 149-residue chain is Transcriptional repressor NrdR (149 aa).

A zinc finger spans residues 3-34 (CPFCFAVDTKVIDSRLVGGGSSVRRRRQCLVC). In terms of domain architecture, ATP-cone spans 49–139 (PRVVKSNDVR…VYRSFEDIKE (91 aa)).

Belongs to the NrdR family. It depends on Zn(2+) as a cofactor.

In terms of biological role, negatively regulates transcription of bacterial ribonucleotide reductase nrd genes and operons by binding to NrdR-boxes. The sequence is that of Transcriptional repressor NrdR from Shigella boydii serotype 18 (strain CDC 3083-94 / BS512).